A 138-amino-acid polypeptide reads, in one-letter code: Superoxide dismutase [Mn] (138 aa).

4 residues coordinate Mn(2+): histidine 1, histidine 49, aspartate 133, and histidine 137.

Belongs to the iron/manganese superoxide dismutase family. The cofactor is Mn(2+).

The enzyme catalyses 2 superoxide + 2 H(+) = H2O2 + O2. Functionally, destroys superoxide anion radicals which are normally produced within the cells and which are toxic to biological systems. The sequence is that of Superoxide dismutase [Mn] (sodA) from Mycobacterium celatum.